A 409-amino-acid polypeptide reads, in one-letter code: 1-deoxy-D-xylulose 5-phosphate reductoisomerase (409 aa).

Thr-10, Gly-11, Ser-12, Ile-13, Gly-36, Arg-37, Asn-38, and Asn-126 together coordinate NADPH. Lys-127 contacts 1-deoxy-D-xylulose 5-phosphate. Residue Glu-128 participates in NADPH binding. Position 152 (Asp-152) interacts with Mn(2+). The 1-deoxy-D-xylulose 5-phosphate site is built by Ser-153, Glu-154, Ser-190, and His-213. Glu-154 provides a ligand contact to Mn(2+). NADPH is bound at residue Gly-219. Ser-226, Asn-231, Lys-232, and Glu-235 together coordinate 1-deoxy-D-xylulose 5-phosphate. Glu-235 contributes to the Mn(2+) binding site.

This sequence belongs to the DXR family. Mg(2+) serves as cofactor. Mn(2+) is required as a cofactor.

It carries out the reaction 2-C-methyl-D-erythritol 4-phosphate + NADP(+) = 1-deoxy-D-xylulose 5-phosphate + NADPH + H(+). It functions in the pathway isoprenoid biosynthesis; isopentenyl diphosphate biosynthesis via DXP pathway; isopentenyl diphosphate from 1-deoxy-D-xylulose 5-phosphate: step 1/6. Functionally, catalyzes the NADPH-dependent rearrangement and reduction of 1-deoxy-D-xylulose-5-phosphate (DXP) to 2-C-methyl-D-erythritol 4-phosphate (MEP). This Prochlorococcus marinus (strain MIT 9515) protein is 1-deoxy-D-xylulose 5-phosphate reductoisomerase.